Consider the following 688-residue polypeptide: Potassium-transporting ATPase ATP-binding subunit (688 aa).

4 helical membrane passes run 35–55 (VMFVVYLGSGLTTILWIAMLA), 62–82 (ALFTGNIALWLWFTVLFANFA), 219–239 (IALTILLTALTIIFLLVCVTL), and 260–280 (VLIALLVCLIPTTIGGLLSAI). D313 serves as the catalytic 4-aspartylphosphate intermediate. Residues D350, E354, 383 to 390 (FSAMTRMS), and K401 each bind ATP. D524 and D528 together coordinate Mg(2+). Transmembrane regions (helical) follow at residues 594-614 (FAIIPAAFAVTYPQLNILNIM), 622-642 (AVLSTVIFNALIIVFLIPLAL), and 667-687 (GLIAPFIGIKLIDLLLTLLIL).

This sequence belongs to the cation transport ATPase (P-type) (TC 3.A.3) family. Type IA subfamily. In terms of assembly, the system is composed of three essential subunits: KdpA, KdpB and KdpC.

Its subcellular location is the cell inner membrane. It catalyses the reaction K(+)(out) + ATP + H2O = K(+)(in) + ADP + phosphate + H(+). Its function is as follows. Part of the high-affinity ATP-driven potassium transport (or Kdp) system, which catalyzes the hydrolysis of ATP coupled with the electrogenic transport of potassium into the cytoplasm. This subunit is responsible for energy coupling to the transport system and for the release of the potassium ions to the cytoplasm. This chain is Potassium-transporting ATPase ATP-binding subunit, found in Photorhabdus laumondii subsp. laumondii (strain DSM 15139 / CIP 105565 / TT01) (Photorhabdus luminescens subsp. laumondii).